A 493-amino-acid polypeptide reads, in one-letter code: Voltage-gated potassium channel regulatory subunit KCNF1 (493 aa).

Over 1 to 183 the chain is Cytoplasmic; the sequence is MDASAEQSLP…KPESSCPARV (183 aa). The helical transmembrane segment at 184-204 threads the bilayer; that stretch reads VAVLSFLLILVSSVVMCMGTI. The chain crosses the membrane as a helical span at residues 224 to 244; it reads NVETACIGWFTLEYLLRLFSS. Over 245–249 the chain is Cytoplasmic; sequence PNKLH. Residues 250 to 270 form a helical membrane-spanning segment; sequence FALSFMNIVDVLAILPFYVSL. The chain crosses the membrane as a helical; Voltage-sensor span at residues 290–310; sequence QALRIMRIARIFKLARHSSGL. Topologically, residues 311–324 are cytoplasmic; that stretch reads QTLTYALKRSFKEL. A helical membrane pass occupies residues 325-345; that stretch reads GLLLMYLAVGIFVFSALGYTM. Positions 358 to 378 form an intramembrane region, pore-forming; sequence PQSFWWAIITMTTVGYGDIYP. The Selectivity filter motif lies at 370–375; that stretch reads TVGYGD. Residues 386 to 406 form a helical membrane-spanning segment; it reads NAAISFLCGVIAIALPIHPII. The Cytoplasmic segment spans residues 407–493; sequence NNFVRYYNKQ…HHRTRLQSCK (87 aa). The interval 434–468 is disordered; that stretch reads SSSAEGKPGGSRSDLDTLPPEPAAREGPSWGSRLK.

Belongs to the potassium channel family. F (TC 1.A.1.2) subfamily. Kv5.1/KCNF1 sub-subfamily. As to quaternary structure, heterotetramer with KCNB1 or KCNB2.

The protein localises to the cell membrane. In terms of biological role, regulatory alpha-subunit of the voltage-gated potassium (Kv) channel which, when coassembled with KCNB1 or KCNB2, can modulate their expression and their gating kinetics by acting on deactivation upon repolarization and inactivation during maintained depolarization. Accelerates inactivation but has relatively little effect on deactivation. Coexpression with KCNB1 or KCNB2 markedly slows inactivation. Each modulatory subunit has its own specific properties of regulation, and can lead to extensive inhibitions, to large changes in kinetics, and/or to large shifts in the voltage dependencies of the inactivation process. The gating kinetics depends on the nature and stoichiometry of the associated regulatory sunbunit. Fails to produce a potassium current when expressed alone. This is Voltage-gated potassium channel regulatory subunit KCNF1 from Mus musculus (Mouse).